The following is a 416-amino-acid chain: Alpha-1-antiproteinase (416 aa).

Residues 1–24 form the signal peptide; it reads MALSITRGLLLLAALCCLAPISLA. N-linked (GlcNAc...) asparagine glycosylation is found at Asn68, Asn105, Asn143, and Asn269. Residues 371-390 are RCL; the sequence is GSTFLEAIPMSLPPDVEFNR. Residue Ser381 is modified to Phosphoserine.

It belongs to the serpin family. In terms of assembly, interacts with CELA2A. Interacts with ERGIC3 and LMAN1/ERGIC53. Interacts with PRSS1/Trypsin. In terms of tissue distribution, plasma.

It localises to the secreted. Functionally, inhibitor of serine proteases. Its primary target is elastase, but it also has a moderate affinity for plasmin and thrombin. Inhibits trypsin, chymotrypsin and plasminogen activator. This chain is Alpha-1-antiproteinase (SERPINA1), found in Bos taurus (Bovine).